The sequence spans 152 residues: MDEQEIQRLVEEVSLQYFEMPFLHKAVFNNRLRTTGGRYLLKSHNIELNYRYYELYGEEELVGIIKHELCHYHLHIAGRGYKHGDRDFRELLKKVDAPRFCKRMINEEKEKKIYKYECMECSLQYVRRRQINIKRYVCGKCKGKLKPISKTS.

In terms of domain architecture, SprT-like spans 7–147 (QRLVEEVSLQ…CGKCKGKLKP (141 aa)). A Zn(2+)-binding site is contributed by H67. E68 is an active-site residue. A Zn(2+)-binding site is contributed by H71.

It belongs to the SprT family. The cofactor is Zn(2+).

The protein resides in the cytoplasm. The protein is Protein SprT-like of Bacillus cereus (strain ATCC 14579 / DSM 31 / CCUG 7414 / JCM 2152 / NBRC 15305 / NCIMB 9373 / NCTC 2599 / NRRL B-3711).